Reading from the N-terminus, the 246-residue chain is Deoxycytidylate 5-hydroxymethyltransferase (246 aa).

The active site involves cysteine 148.

Belongs to the thymidylate synthase family.

It catalyses the reaction dCMP + (6R)-5,10-methylene-5,6,7,8-tetrahydrofolate + H2O = 5-hydroxymethyl-dCMP + (6S)-5,6,7,8-tetrahydrofolate. The sequence is that of Deoxycytidylate 5-hydroxymethyltransferase (42) from Enterobacteria phage T4 (Bacteriophage T4).